Here is a 371-residue protein sequence, read N- to C-terminus: MISLHSSAIKASLYGSFPSSLRSTLSVSFSAGSLIRLPSVGKRNLSVVVSSGRDSSMSSNNVSRGSSSKVAAESFFRSVLGQMETVYLNRNPTPKSVLELVRSVDDQQLCYDHLAFRTFGIGGYGIDSLASFFLDYGYTPMDELKFPAKKLRALWFAPPNASAVPGGSGVNGPLPRVFISELLVDQMSSQTQDVIRKYTEASPNGKKYAGLSSALGTLTWEKPLSSEFEQLARESEYAAWTLVNGYALNHVTISVHRLKSHLNKIKKLNQFLEEKGIKLNSEGGVLKVSPDGGLQQSSTVADSISFKFADGVTKSIPCSYIEFAERLVLPQYQNIPESEIQESHRRDGFEVGNADKIFESTFQEQLSRRTG.

The N-terminal 50 residues, 1-50, are a transit peptide targeting the chloroplast; that stretch reads MISLHSSAIKASLYGSFPSSLRSTLSVSFSAGSLIRLPSVGKRNLSVVVS. 2-oxoadipate contacts are provided by H113 and R117. H113 contributes to the Fe(2+) binding site. H250 contacts Fe(2+). Residues Q296 and Y320 each coordinate 2-oxoadipate. E322 contributes to the Fe(2+) binding site.

It belongs to the 2-oxoadipate dioxygenase/decarboxylase family. It depends on Fe(2+) as a cofactor.

It localises to the plastid. The protein resides in the chloroplast. The enzyme catalyses 2-oxoadipate + O2 = (R)-2-hydroxyglutarate + CO2. It participates in amino-acid degradation. Its function is as follows. Catalyzes the decarboxylation and hydroxylation of 2-oxoadipate (2OA) to form D-2-hydroxyglutarate (D-2-HGA). Is involved in a D-lysine catabolic pathway. The protein is 2-oxoadipate dioxygenase/decarboxylase, chloroplastic of Arabidopsis thaliana (Mouse-ear cress).